A 527-amino-acid polypeptide reads, in one-letter code: EGF domain-specific O-linked N-acetylglucosamine transferase (527 aa).

The signal sequence occupies residues 1–19 (MLMLLVFGVLLHEVPLSGQ). Positions 295–297 (DYD) match the Required for optimal activity motif. An N-linked (GlcNAc...) asparagine glycan is attached at N354. Positions 524-527 (HDEL) match the Prevents secretion from ER motif.

The protein belongs to the glycosyltransferase 61 family. Widely expressed. Expressed in brain, heart, kidney, lung, skeletal muscles and thymus. Highest expression is observed in lung and the lowest in skeletal muscles.

It is found in the endoplasmic reticulum lumen. It carries out the reaction L-seryl-[protein] + UDP-N-acetyl-alpha-D-glucosamine = 3-O-(N-acetyl-beta-D-glucosaminyl)-L-seryl-[protein] + UDP + H(+). The enzyme catalyses L-threonyl-[protein] + UDP-N-acetyl-alpha-D-glucosamine = 3-O-(N-acetyl-beta-D-glucosaminyl)-L-threonyl-[protein] + UDP + H(+). In terms of biological role, catalyzes the transfer of a single N-acetylglucosamine from UDP-GlcNAc to a serine or threonine residue in extracellular proteins resulting in their modification with a beta-linked N-acetylglucosamine (O-GlcNAc). Specifically glycosylates the Thr residue located between the fifth and sixth conserved cysteines of folded EGF-like domains. The polypeptide is EGF domain-specific O-linked N-acetylglucosamine transferase (Eogt) (Mus musculus (Mouse)).